The following is a 162-amino-acid chain: GTP-dependent dephospho-CoA kinase (162 aa).

6 residues coordinate GTP: Asp-40, Val-41, Val-42, Asp-59, Lys-61, and Glu-111.

It belongs to the GTP-dependent DPCK family.

It carries out the reaction 3'-dephospho-CoA + GTP = GDP + CoA + H(+). It participates in cofactor biosynthesis; coenzyme A biosynthesis. Its function is as follows. Catalyzes the GTP-dependent phosphorylation of the 3'-hydroxyl group of dephosphocoenzyme A to form coenzyme A (CoA). This chain is GTP-dependent dephospho-CoA kinase, found in Sulfurisphaera tokodaii (strain DSM 16993 / JCM 10545 / NBRC 100140 / 7) (Sulfolobus tokodaii).